The sequence spans 303 residues: Quinolinate synthase (303 aa).

Iminosuccinate is bound by residues histidine 23 and serine 40. Cysteine 85 is a [4Fe-4S] cluster binding site. Residues 111–113 and serine 128 contribute to the iminosuccinate site; that span reads YIN. Cysteine 171 serves as a coordination point for [4Fe-4S] cluster. Residues 197–199 and threonine 214 contribute to the iminosuccinate site; that span reads HPE. [4Fe-4S] cluster is bound at residue cysteine 259.

This sequence belongs to the quinolinate synthase family. Type 2 subfamily. It depends on [4Fe-4S] cluster as a cofactor.

Its subcellular location is the cytoplasm. The enzyme catalyses iminosuccinate + dihydroxyacetone phosphate = quinolinate + phosphate + 2 H2O + H(+). It participates in cofactor biosynthesis; NAD(+) biosynthesis; quinolinate from iminoaspartate: step 1/1. In terms of biological role, catalyzes the condensation of iminoaspartate with dihydroxyacetone phosphate to form quinolinate. This chain is Quinolinate synthase, found in Clostridium acetobutylicum (strain ATCC 824 / DSM 792 / JCM 1419 / IAM 19013 / LMG 5710 / NBRC 13948 / NRRL B-527 / VKM B-1787 / 2291 / W).